The sequence spans 168 residues: Photosystem I assembly protein Ycf3 (168 aa).

TPR repeat units lie at residues 35-68, 72-105, and 120-153; these read AFTYYRDGMSAQSEGNYAEALQNYYEAMRLEIDP, SYILYNIGLIHTSNGEHTKALEYYFRALERNPFL, and GEQAIQQGDSEMAEAWFAQAAEYWKQAITLTPGN.

The protein belongs to the Ycf3 family. In terms of assembly, interacts with Y3IP1.

Its subcellular location is the plastid. It localises to the chloroplast thylakoid membrane. Essential for the assembly of the photosystem I (PSI) complex. May act as a chaperone-like factor to guide the assembly of the PSI subunits. The polypeptide is Photosystem I assembly protein Ycf3 (Arabidopsis thaliana (Mouse-ear cress)).